Reading from the N-terminus, the 137-residue chain is Large ribosomal subunit protein uL16 (137 aa).

It belongs to the universal ribosomal protein uL16 family. Part of the 50S ribosomal subunit.

Its function is as follows. Binds 23S rRNA and is also seen to make contacts with the A and possibly P site tRNAs. The sequence is that of Large ribosomal subunit protein uL16 from Halorhodospira halophila (strain DSM 244 / SL1) (Ectothiorhodospira halophila (strain DSM 244 / SL1)).